The sequence spans 368 residues: Agmatine deiminase (368 aa).

The Amidino-cysteine intermediate role is filled by C357.

It belongs to the agmatine deiminase family. Homodimer.

The enzyme catalyses agmatine + H2O = N-carbamoylputrescine + NH4(+). It participates in amine and polyamine biosynthesis; putrescine biosynthesis via agmatine pathway; N-carbamoylputrescine from agmatine: step 1/1. Functionally, mediates the hydrolysis of agmatine into N-carbamoylputrescine in the arginine decarboxylase (ADC) pathway of putrescine biosynthesis, a basic polyamine. The polypeptide is Agmatine deiminase (Pseudomonas putida (strain ATCC 47054 / DSM 6125 / CFBP 8728 / NCIMB 11950 / KT2440)).